The primary structure comprises 103 residues: Large ribosomal subunit protein bL21 (103 aa).

It belongs to the bacterial ribosomal protein bL21 family. As to quaternary structure, part of the 50S ribosomal subunit. Contacts protein L20.

In terms of biological role, this protein binds to 23S rRNA in the presence of protein L20. The protein is Large ribosomal subunit protein bL21 of Albidiferax ferrireducens (strain ATCC BAA-621 / DSM 15236 / T118) (Rhodoferax ferrireducens).